The chain runs to 162 residues: Small ribosomal subunit protein uS13 (162 aa).

The interval 142–162 is disordered; sequence RGQRTKSTGRRGSTVGVSRKK.

This sequence belongs to the universal ribosomal protein uS13 family. In terms of assembly, part of the 30S ribosomal subunit. Forms a loose heterodimer with protein S19. Forms two bridges to the 50S subunit in the 70S ribosome.

Its function is as follows. Located at the top of the head of the 30S subunit, it contacts several helices of the 16S rRNA. In the 70S ribosome it contacts the 23S rRNA (bridge B1a) and protein L5 of the 50S subunit (bridge B1b), connecting the 2 subunits; these bridges are implicated in subunit movement. This Methanosarcina mazei (strain ATCC BAA-159 / DSM 3647 / Goe1 / Go1 / JCM 11833 / OCM 88) (Methanosarcina frisia) protein is Small ribosomal subunit protein uS13.